A 154-amino-acid polypeptide reads, in one-letter code: Large ribosomal subunit protein uL22 (154 aa).

Belongs to the universal ribosomal protein uL22 family. In terms of assembly, part of the 50S ribosomal subunit.

This protein binds specifically to 23S rRNA. It makes multiple contacts with different domains of the 23S rRNA in the assembled 50S subunit and ribosome. In terms of biological role, the globular domain of the protein is located near the polypeptide exit tunnel on the outside of the subunit, while an extended beta-hairpin is found that lines the wall of the exit tunnel in the center of the 70S ribosome. In Methanosphaera stadtmanae (strain ATCC 43021 / DSM 3091 / JCM 11832 / MCB-3), this protein is Large ribosomal subunit protein uL22.